Reading from the N-terminus, the 764-residue chain is FAST kinase domain-containing protein 5, mitochondrial (764 aa).

Position 95 is a phosphoserine (Ser95). Lys507 is subject to N6-acetyllysine. The 61-residue stretch at 697–757 (LAIQFTNRNQ…RLEKLAFLHE (61 aa)) folds into the RAP domain.

It belongs to the FAST kinase family. Found in a complex with GRSF1, DDX28, DHX30 and FASTKD2. Associates with the 12S mitochondrial rRNA (12S mt-rRNA).

Its subcellular location is the mitochondrion matrix. The protein localises to the mitochondrion nucleoid. Plays an important role in the processing of non-canonical mitochondrial mRNA precursors. The protein is FAST kinase domain-containing protein 5, mitochondrial (FASTKD5) of Macaca fascicularis (Crab-eating macaque).